We begin with the raw amino-acid sequence, 216 residues long: Pyridoxine/pyridoxamine 5'-phosphate oxidase (216 aa).

Residues 63 to 68 (RMVLMK), 78 to 79 (YS), lysine 85, and glutamine 107 contribute to the FMN site. Position 68 (lysine 68) interacts with substrate. The substrate site is built by tyrosine 125 and arginine 129. FMN is bound by residues 142 to 143 (QS) and tryptophan 187. 193 to 195 (RLH) contributes to the substrate binding site. Arginine 197 is a binding site for FMN.

The protein belongs to the pyridoxamine 5'-phosphate oxidase family. As to quaternary structure, homodimer. FMN serves as cofactor.

The enzyme catalyses pyridoxamine 5'-phosphate + O2 + H2O = pyridoxal 5'-phosphate + H2O2 + NH4(+). It catalyses the reaction pyridoxine 5'-phosphate + O2 = pyridoxal 5'-phosphate + H2O2. It functions in the pathway cofactor metabolism; pyridoxal 5'-phosphate salvage; pyridoxal 5'-phosphate from pyridoxamine 5'-phosphate: step 1/1. The protein operates within cofactor metabolism; pyridoxal 5'-phosphate salvage; pyridoxal 5'-phosphate from pyridoxine 5'-phosphate: step 1/1. In terms of biological role, catalyzes the oxidation of either pyridoxine 5'-phosphate (PNP) or pyridoxamine 5'-phosphate (PMP) into pyridoxal 5'-phosphate (PLP). In Bradyrhizobium sp. (strain ORS 278), this protein is Pyridoxine/pyridoxamine 5'-phosphate oxidase.